We begin with the raw amino-acid sequence, 151 residues long: Putative esterase VNG_1336C (151 aa).

The protein belongs to the thioesterase PaaI family.

The chain is Putative esterase VNG_1336C from Halobacterium salinarum (strain ATCC 700922 / JCM 11081 / NRC-1) (Halobacterium halobium).